A 208-amino-acid polypeptide reads, in one-letter code: Urease accessory protein UreG 1 (208 aa).

GTP is bound at residue 14 to 21; that stretch reads GPVGSGKT.

This sequence belongs to the SIMIBI class G3E GTPase family. UreG subfamily. Homodimer. UreD, UreF and UreG form a complex that acts as a GTP-hydrolysis-dependent molecular chaperone, activating the urease apoprotein by helping to assemble the nickel containing metallocenter of UreC. The UreE protein probably delivers the nickel.

It is found in the cytoplasm. In terms of biological role, facilitates the functional incorporation of the urease nickel metallocenter. This process requires GTP hydrolysis, probably effectuated by UreG. Its function is as follows. Disruption of the ure1 gene cluster suggests that it protects brucellae during their passage through the stomach. The major route of infection in human brucellosis is oral. The protein is Urease accessory protein UreG 1 of Brucella abortus (strain 2308).